The following is a 199-amino-acid chain: NADH-ubiquinone oxidoreductase chain 6 (199 aa).

5 consecutive transmembrane segments (helical) span residues 1 to 21, 27 to 47, 49 to 69, 87 to 107, and 150 to 170; these read MILF…VIRA, SVLF…LLGL, FFAM…FLFV, YLPV…LMVD, and FFLF…AIVL.

This sequence belongs to the complex I subunit 6 family.

The protein localises to the mitochondrion membrane. The catalysed reaction is a ubiquinone + NADH + 5 H(+)(in) = a ubiquinol + NAD(+) + 4 H(+)(out). Its function is as follows. Core subunit of the mitochondrial membrane respiratory chain NADH dehydrogenase (Complex I) that is believed to belong to the minimal assembly required for catalysis. Complex I functions in the transfer of electrons from NADH to the respiratory chain. The immediate electron acceptor for the enzyme is believed to be ubiquinone. The sequence is that of NADH-ubiquinone oxidoreductase chain 6 (ND6) from Marchantia polymorpha (Common liverwort).